Consider the following 366-residue polypeptide: GTPase Obg (366 aa).

In terms of domain architecture, Obg spans methionine 1–leucine 162. In terms of domain architecture, OBG-type G spans alanine 163–aspartate 335. GTP contacts are provided by residues glycine 169 to serine 176, phenylalanine 194 to threonine 198, aspartate 218 to glycine 221, asparagine 288 to aspartate 291, and serine 316 to methionine 318. Mg(2+) is bound by residues serine 176 and threonine 196.

Belongs to the TRAFAC class OBG-HflX-like GTPase superfamily. OBG GTPase family. In terms of assembly, monomer. It depends on Mg(2+) as a cofactor.

The protein resides in the cytoplasm. In terms of biological role, an essential GTPase which binds GTP, GDP and possibly (p)ppGpp with moderate affinity, with high nucleotide exchange rates and a fairly low GTP hydrolysis rate. Plays a role in control of the cell cycle, stress response, ribosome biogenesis and in those bacteria that undergo differentiation, in morphogenesis control. This is GTPase Obg from Nitratidesulfovibrio vulgaris (strain ATCC 29579 / DSM 644 / CCUG 34227 / NCIMB 8303 / VKM B-1760 / Hildenborough) (Desulfovibrio vulgaris).